The following is a 453-amino-acid chain: Serine/threonine-protein phosphatase 2A regulatory subunit B'' subunit gamma (453 aa).

The disordered stretch occupies residues 1–27 (MDWKDVLRRRLASPNSDPKRKKSEQEL). EF-hand domains lie at 273 to 308 (PSAL…TMTN) and 341 to 376 (KEPA…IQEL). Positions 286, 288, 290, 292, and 297 each coordinate Ca(2+).

Interacts with MCM3AP/GANP, PPP5C, and the phosphatase 2A core enzyme composed of the PPP2CA catalytic subunit and the constant regulatory subunit PPP2R1A. Finds in a complex with ABCB1, TFPI2 and PPP2R3C; leading to the dephosphorylation of ABCB1.

Its subcellular location is the nucleus. It is found in the cytoplasm. Functionally, may regulate MCM3AP phosphorylation through phosphatase recruitment. May act as a negative regulator of ABCB1 expression and function through the dephosphorylation of ABCB1 by TFPI2/PPP2R3C complex. May play a role in the activation-induced cell death of B-cells. The sequence is that of Serine/threonine-protein phosphatase 2A regulatory subunit B'' subunit gamma (Ppp2r3c) from Rattus norvegicus (Rat).